The chain runs to 622 residues: Threonine--tRNA ligase (622 aa).

The interval 1–141 is editing domain; the sequence is MKTLLIHSDY…SRKITTERKE (141 aa). The catalytic stretch occupies residues 199 to 498; it reads PHVKYIKEKE…TLENKPPALP (300 aa). Positions 291, 343, and 467 each coordinate Zn(2+).

It belongs to the class-II aminoacyl-tRNA synthetase family. As to quaternary structure, homodimer. The cofactor is Zn(2+).

It is found in the cytoplasm. It catalyses the reaction tRNA(Thr) + L-threonine + ATP = L-threonyl-tRNA(Thr) + AMP + diphosphate + H(+). Functionally, catalyzes the attachment of threonine to tRNA(Thr) in a two-step reaction: L-threonine is first activated by ATP to form Thr-AMP and then transferred to the acceptor end of tRNA(Thr). Also edits incorrectly charged L-seryl-tRNA(Thr). The polypeptide is Threonine--tRNA ligase (Methanococcus maripaludis (strain C5 / ATCC BAA-1333)).